The primary structure comprises 301 residues: Protein ARMCX6 (301 aa).

The interval 1–6 (MGRARE) is mitochondrion outer membrane (MOM)-targeting sequence. The Mitochondrial intermembrane portion of the chain corresponds to 1–7 (MGRAREM). Residues 8–25 (GWMAAGLMIGAGACYCMY) form a helical; Signal-anchor membrane-spanning segment. Residues 26 to 36 (KLTMGRSEGNE) form a mitochondrion outer membrane (MOM)-targeting sequence region. The Cytoplasmic portion of the chain corresponds to 26–301 (KLTMGRSEGN…REMLVEAISP (276 aa)). Positions 69–101 (WSEDGDWDEPGAPGGTEDRRSGGGKANRAHPIK) are disordered.

Belongs to the eutherian X-chromosome-specific Armcx family. As to expression, highly expressed in the developing neural tissues, neural crest derivatives and hind limbs. Also widely expressed in the adult nervous tissue, especially in the forebrain, including the cerebral cortex, hippocampus and thalamus.

The protein resides in the mitochondrion. It is found in the mitochondrion outer membrane. Functionally, may regulate the dynamics and distribution of mitochondria in neural cells. This is Protein ARMCX6 (Armcx6) from Mus musculus (Mouse).